The following is a 926-amino-acid chain: Peripheral plasma membrane protein CASK (926 aa).

One can recognise a Protein kinase domain in the interval 12-276; it reads YELCEVIGKG…VYEALNHPWL (265 aa). Residues 18-26 and Lys41 contribute to the ATP site; that span reads IGKGPFSVV. Residue Ser51 is modified to Phosphoserine. Residue Asp141 is part of the active site. 2 positions are modified to phosphoserine; by autocatalysis: Ser151 and Ser155. A Phosphothreonine modification is found at Thr182. A phosphoserine mark is found at Lys192 and Ser313. A calmodulin-binding region spans residues 305-315; sequence KGAVLAAVSSH. 2 consecutive L27 domains span residues 343–398 and 402–455; these read AERA…SPQI and PSDA…YSDE. The interval 482–909 is required for interaction with NRXN1 (via C-terminal tail); the sequence is MENVTRVRLV…DETIRHLEEA (428 aa). In terms of domain architecture, PDZ spans 489–564; the sequence is RLVQFQKNTD…MLREMRGSIT (76 aa). 2 positions are modified to phosphoserine: Tyr571 and Ser577. The disordered stretch occupies residues 574-610; the sequence is QSSSCERDSPSTSRQSPANGHSSTNNSVSDLPSTTQP. Residues 612-682 form the SH3 domain; it reads GRQIYVRAQF…PSPELQEWRV (71 aa). Residues 739–911 enclose the Guanylate kinase-like domain; sequence RKTLVLLGAH…TIRHLEEAVE (173 aa).

In the N-terminal section; belongs to the protein kinase superfamily. CAMK Ser/Thr protein kinase family. CaMK subfamily. The protein belongs to the MAGUK family. CASK and LIN7 form two mutually exclusive tripartite complexes with APBA1 or CASKIN1. Component of the brain-specific heterotrimeric complex (LIN-10-LIN-2-LIN-7 complex) composed of at least APBA1, CASK, and LIN7, which associates with the motor protein KIF17 to transport vesicles along microtubules. Forms a heterotrimeric complex with DLG1 and LIN7B via their L27 domains. Identified in a complex with ACTN4, IQGAP1, MAGI2, NPHS1, SPTAN1 and SPTBN1. Part of a complex containing CASK, TBR1 and TSPYL2. Interacts with WHRN. Interacts (via the PDZ, SH3 and guanylate kinase-like domains) with NRXN1 (via C-terminus). Interacts with CASKIN1, APBA1, LIN7(A/B/C) and L27 domain of DLG1 and isoform 2 of DLG4. Interacts with FCHSD2. Interacts with KIRREL3. Interacts with TBR1. Interacts with TSPYL2. It depends on Unlike other protein kinases, does not require a divalent cation such as magnesium for catalytic activity. as a cofactor. As to expression, ubiquitous. Expression is significantly greater in brain relative to kidney, lung, and liver and in fetal brain and kidney relative to lung and liver.

It localises to the nucleus. Its subcellular location is the cytoplasm. The protein resides in the cell membrane. It catalyses the reaction L-seryl-[protein] + ATP = O-phospho-L-seryl-[protein] + ADP + H(+). It carries out the reaction L-threonyl-[protein] + ATP = O-phospho-L-threonyl-[protein] + ADP + H(+). Differs from archetypal CaMK members in that the kinase domain exhibits a constitutively active conformation and the autoinhibitory region does not engage in direct contact with the ATP-binding cleft, although it still binds Ca(2+)/CAM. In terms of biological role, multidomain scaffolding Mg(2+)-independent protein kinase that catalyzes the phosphotransfer from ATP to proteins such as NRXN1, and plays a role in synaptic transmembrane protein anchoring and ion channel trafficking. Contributes to neural development and regulation of gene expression via interaction with the transcription factor TBR1. Binds to cell-surface proteins, including amyloid precursor protein, neurexins and syndecans. May mediate a link between the extracellular matrix and the actin cytoskeleton via its interaction with syndecan and with the actin/spectrin-binding protein 4.1. Component of the LIN-10-LIN-2-LIN-7 complex, which associates with the motor protein KIF17 to transport vesicles containing N-methyl-D-aspartate (NMDA) receptor subunit NR2B along microtubules. In Homo sapiens (Human), this protein is Peripheral plasma membrane protein CASK.